A 65-amino-acid polypeptide reads, in one-letter code: Weak neurotoxin 8 (65 aa).

Intrachain disulfides connect cysteine 3/cysteine 24, cysteine 6/cysteine 11, cysteine 17/cysteine 42, cysteine 46/cysteine 57, and cysteine 58/cysteine 63.

The protein belongs to the three-finger toxin family. Ancestral subfamily. Orphan group II sub-subfamily. In terms of tissue distribution, expressed by the venom gland.

It is found in the secreted. Its function is as follows. Binds with low affinity to muscular (alpha-1-beta-1-delta-epsilon/CHRNA1-CHRNB1-CHRND-CHRNE) and very low affinity to neuronal (alpha-7/CHRNA7) nicotinic acetylcholine receptor (nAChR). The protein is Weak neurotoxin 8 of Naja naja (Indian cobra).